The chain runs to 289 residues: 2-dehydro-3-deoxyphosphooctonate aldolase (289 aa).

It belongs to the KdsA family.

Its subcellular location is the cytoplasm. It carries out the reaction D-arabinose 5-phosphate + phosphoenolpyruvate + H2O = 3-deoxy-alpha-D-manno-2-octulosonate-8-phosphate + phosphate. Its pathway is carbohydrate biosynthesis; 3-deoxy-D-manno-octulosonate biosynthesis; 3-deoxy-D-manno-octulosonate from D-ribulose 5-phosphate: step 2/3. It participates in bacterial outer membrane biogenesis; lipopolysaccharide biosynthesis. The chain is 2-dehydro-3-deoxyphosphooctonate aldolase from Cupriavidus necator (strain ATCC 17699 / DSM 428 / KCTC 22496 / NCIMB 10442 / H16 / Stanier 337) (Ralstonia eutropha).